A 526-amino-acid chain; its full sequence is ATP synthase subunit alpha (526 aa).

Residue Gly171–Thr178 participates in ATP binding.

Belongs to the ATPase alpha/beta chains family. F-type ATPases have 2 components, CF(1) - the catalytic core - and CF(0) - the membrane proton channel. CF(1) has five subunits: alpha(3), beta(3), gamma(1), delta(1), epsilon(1). CF(0) has four main subunits: a, b, b' and c.

The protein resides in the cell inner membrane. It catalyses the reaction ATP + H2O + 4 H(+)(in) = ADP + phosphate + 5 H(+)(out). Functionally, produces ATP from ADP in the presence of a proton gradient across the membrane. The alpha chain is a regulatory subunit. This chain is ATP synthase subunit alpha, found in Pelodictyon phaeoclathratiforme (strain DSM 5477 / BU-1).